The primary structure comprises 373 residues: Peptide chain release factor 2 (373 aa).

An N5-methylglutamine modification is found at Gln251.

Belongs to the prokaryotic/mitochondrial release factor family. Post-translationally, methylated by PrmC. Methylation increases the termination efficiency of RF2.

The protein localises to the cytoplasm. Functionally, peptide chain release factor 2 directs the termination of translation in response to the peptide chain termination codons UGA and UAA. This chain is Peptide chain release factor 2, found in Salinispora arenicola (strain CNS-205).